A 426-amino-acid chain; its full sequence is Enolase (426 aa).

Q162 contacts (2R)-2-phosphoglycerate. Catalysis depends on E204, which acts as the Proton donor. Positions 241, 284, and 311 each coordinate Mg(2+). (2R)-2-phosphoglycerate-binding residues include K336, R365, S366, and K387. K336 (proton acceptor) is an active-site residue.

This sequence belongs to the enolase family. Requires Mg(2+) as cofactor.

The protein localises to the cytoplasm. It localises to the secreted. It is found in the cell surface. The enzyme catalyses (2R)-2-phosphoglycerate = phosphoenolpyruvate + H2O. The protein operates within carbohydrate degradation; glycolysis; pyruvate from D-glyceraldehyde 3-phosphate: step 4/5. Functionally, catalyzes the reversible conversion of 2-phosphoglycerate (2-PG) into phosphoenolpyruvate (PEP). It is essential for the degradation of carbohydrates via glycolysis. The polypeptide is Enolase (Acidithiobacillus ferrooxidans (strain ATCC 23270 / DSM 14882 / CIP 104768 / NCIMB 8455) (Ferrobacillus ferrooxidans (strain ATCC 23270))).